Here is a 574-residue protein sequence, read N- to C-terminus: (R)-mandelonitrile lyase 4 (574 aa).

Positions 1 to 27 (MEKSTMSAVVLVLNLLVLHLQYSEVHS) are cleaved as a signal peptide. Asn-30 carries N-linked (GlcNAc...) asparagine glycosylation. Position 64 to 65 (64 to 65 (TS)) interacts with FAD. Residue Asn-76 is glycosylated (N-linked (GlcNAc...) asparagine). Residues 83-84 (ER), Thr-134, and 138-141 (NAGV) contribute to the FAD site. N-linked (GlcNAc...) asparagine glycans are attached at residues Asn-146, Asn-151, and Asn-179. FAD is bound at residue Val-245. Asn-268 and Asn-310 each carry an N-linked (GlcNAc...) asparagine glycan. Substrate is bound at residue Cys-357. 3 N-linked (GlcNAc...) asparagine glycosylation sites follow: Asn-381, Asn-407, and Asn-468. An intrachain disulfide couples Cys-428 to Cys-479. Position 486 (Tyr-486) interacts with substrate. Residues 487–488 (WH) and Gly-516 contribute to the FAD site. His-488 acts as the Proton donor in catalysis. The Proton acceptor role is filled by His-526. FAD is bound at residue 527–528 (PQ).

This sequence belongs to the GMC oxidoreductase family. As to quaternary structure, monomer. It depends on FAD as a cofactor.

The protein localises to the vacuole. It localises to the aleurone grain. It catalyses the reaction (R)-mandelonitrile = benzaldehyde + hydrogen cyanide. In terms of biological role, involved in cyanogenesis, the release of HCN from injured tissues. Catalyzes the stereospecific addition of HCN to a variety of aldehydes in vitro. It is a major seed constituent, and could have the additional role of a storage form for reduced nitrogen. In Prunus serotina (Black cherry), this protein is (R)-mandelonitrile lyase 4 (MDL4).